Reading from the N-terminus, the 406-residue chain is Histone-lysine N-methyltransferase SUV39H2 (406 aa).

One can recognise a Chromo domain in the interval 43–101; the sequence is YEVEYLCDYRIEKGVEKFFVKWKGWPESCNTWEPTRNLKCPTLLKQFYSDLYNYFCALK. The region spanning 185 to 243 is the Pre-SET domain; it reads VGCDCSDCFKGKCCPTEAGVLFAYNEHRQIKIPPGRPIYECNSRCKCGPDCPNRVVQKG. Residues C187, C189, C192, C197, C198, C225, C229, C231, and C235 each contribute to the Zn(2+) site. The 124-residue stretch at 246–369 folds into the SET domain; it reads YSLCIFRTDN…AGEELTFDYQ (124 aa). S-adenosyl-L-methionine is bound by residues 257–259, Y300, and 326–327; these read RGW and NH. Zn(2+) contacts are provided by C329, C394, C396, and C401. In terms of domain architecture, Post-SET spans 390 to 406; sequence VRIACKCGAATCRGYLN.

The protein belongs to the class V-like SAM-binding methyltransferase superfamily. Histone-lysine methyltransferase family. Suvar3-9 subfamily.

The protein localises to the nucleus. The protein resides in the chromosome. It is found in the centromere. It catalyses the reaction L-lysyl(9)-[histone H3] + 3 S-adenosyl-L-methionine = N(6),N(6),N(6)-trimethyl-L-lysyl(9)-[histone H3] + 3 S-adenosyl-L-homocysteine + 3 H(+). Histone methyltransferase that specifically trimethylates 'Lys-9' of histone H3 using monomethylated H3 'Lys-9' as substrate. H3 'Lys-9' trimethylation represents a specific tag for epigenetic transcriptional repression by recruiting HP1 (CBX1, CBX3 and/or CBX5) proteins to methylated histones. Mainly functions in heterochromatin regions, thereby playing a central role in the establishment of constitutive heterochromatin at pericentric and telomere regions. H3 'Lys-9' trimethylation is also required to direct DNA methylation at pericentric repeats. SUV39H1 is targeted to histone H3 via its interaction with RB1 and is involved in many processes. The polypeptide is Histone-lysine N-methyltransferase SUV39H2 (suv39h2) (Xenopus tropicalis (Western clawed frog)).